Reading from the N-terminus, the 312-residue chain is Glyoxylate/hydroxypyruvate reductase A (312 aa).

R227 is a catalytic residue. Catalysis depends on H275, which acts as the Proton donor.

The protein belongs to the D-isomer specific 2-hydroxyacid dehydrogenase family. GhrA subfamily.

Its subcellular location is the cytoplasm. It catalyses the reaction glycolate + NADP(+) = glyoxylate + NADPH + H(+). It carries out the reaction (R)-glycerate + NAD(+) = 3-hydroxypyruvate + NADH + H(+). The enzyme catalyses (R)-glycerate + NADP(+) = 3-hydroxypyruvate + NADPH + H(+). Its function is as follows. Catalyzes the NADPH-dependent reduction of glyoxylate and hydroxypyruvate into glycolate and glycerate, respectively. This chain is Glyoxylate/hydroxypyruvate reductase A, found in Escherichia coli (strain 55989 / EAEC).